The sequence spans 289 residues: Xylosylprotein 4-beta-galactosyltransferase (289 aa).

Topologically, residues 1–6 (MKLKTR) are cytoplasmic. A helical; Signal-anchor for type II membrane protein transmembrane segment spans residues 7–27 (LILSGTILISLAACYFLVLLV). Residues 28-289 (LDLEITRDLM…DLNWTPYCKS (262 aa)) lie on the Lumenal side of the membrane. Residue 58 to 62 (PYRDR) participates in UDP-alpha-D-galactose binding. 2 N-linked (GlcNAc...) asparagine glycosylation sites follow: asparagine 81 and asparagine 90. Residues 97–99 (FNR), 123–124 (VD), tyrosine 154, and tryptophan 184 contribute to the UDP-alpha-D-galactose site. Residue aspartate 124 coordinates Mn(2+). 186-189 (LEDD) is an N-acetyl-D-glucosamine binding site. Asparagine 201 carries an N-linked (GlcNAc...) asparagine glycan. The interval 214 to 236 (NTFRHIHGPKRKRDYTPKKNDKN) is disordered. The span at 217-226 (RHIHGPKRKR) shows a compositional bias: basic residues. Residue histidine 218 coordinates Mn(2+). 218–220 (HIH) serves as a coordination point for UDP-alpha-D-galactose. A compositionally biased stretch (basic and acidic residues) spans 227 to 236 (DYTPKKNDKN).

Belongs to the glycosyltransferase 7 family. The cofactor is Mn(2+).

The protein resides in the membrane. The enzyme catalyses 3-O-(beta-D-xylosyl)-L-seryl-[protein] + UDP-alpha-D-galactose = 3-O-(beta-D-galactosyl-(1-&gt;4)-beta-D-xylosyl)-L-seryl-[protein] + UDP + H(+). Its pathway is protein modification; protein glycosylation. In terms of biological role, glycosyltransferase required for the biosynthesis of the tetrasaccharide (GlcA-Gal-Gal-Xyl-)Ser core linker of heparan sulfate and chondroitin sulfate. Required for embryonic development. Involved in vulval epithelium invagination. Required for axon regeneration after injury. The protein is Xylosylprotein 4-beta-galactosyltransferase (sqv-3) of Caenorhabditis elegans.